A 140-amino-acid chain; its full sequence is Large ribosomal subunit protein uL22 (140 aa).

The segment at 115–140 (AKPAAAKKDPKAAAAKADANAGTKEG) is disordered.

The protein belongs to the universal ribosomal protein uL22 family. As to quaternary structure, part of the 50S ribosomal subunit.

Functionally, this protein binds specifically to 23S rRNA; its binding is stimulated by other ribosomal proteins, e.g. L4, L17, and L20. It is important during the early stages of 50S assembly. It makes multiple contacts with different domains of the 23S rRNA in the assembled 50S subunit and ribosome. Its function is as follows. The globular domain of the protein is located near the polypeptide exit tunnel on the outside of the subunit, while an extended beta-hairpin is found that lines the wall of the exit tunnel in the center of the 70S ribosome. The protein is Large ribosomal subunit protein uL22 of Heliobacterium modesticaldum (strain ATCC 51547 / Ice1).